The sequence spans 698 residues: Elongation factor G (698 aa).

Positions 10–285 (AGTRNIGIMA…AVVDFLPNPL (276 aa)) constitute a tr-type G domain. GTP contacts are provided by residues 19–26 (AHIDAGKT), 83–87 (DTPGH), and 137–140 (NKMD).

It belongs to the TRAFAC class translation factor GTPase superfamily. Classic translation factor GTPase family. EF-G/EF-2 subfamily.

It localises to the cytoplasm. In terms of biological role, catalyzes the GTP-dependent ribosomal translocation step during translation elongation. During this step, the ribosome changes from the pre-translocational (PRE) to the post-translocational (POST) state as the newly formed A-site-bound peptidyl-tRNA and P-site-bound deacylated tRNA move to the P and E sites, respectively. Catalyzes the coordinated movement of the two tRNA molecules, the mRNA and conformational changes in the ribosome. This chain is Elongation factor G, found in Frankia casuarinae (strain DSM 45818 / CECT 9043 / HFP020203 / CcI3).